The following is a 127-amino-acid chain: MAIVGLGTDIVEIERITAHVARSGDKLAKRVLTEAEFDIYQQHSQPSRYLAKRFAAKEAAAKALGTGIGRGVSFQHIHIGNTPDGAPTIDFTQGAQQRLALLNGVVGHISIADEKSYAIATVILESR.

Residues Asp-9 and Glu-58 each coordinate Mg(2+).

Belongs to the P-Pant transferase superfamily. AcpS family. The cofactor is Mg(2+).

The protein resides in the cytoplasm. It carries out the reaction apo-[ACP] + CoA = holo-[ACP] + adenosine 3',5'-bisphosphate + H(+). Functionally, transfers the 4'-phosphopantetheine moiety from coenzyme A to a Ser of acyl-carrier-protein. The sequence is that of Holo-[acyl-carrier-protein] synthase from Shewanella sp. (strain MR-4).